The primary structure comprises 246 residues: 1-(5-phosphoribosyl)-5-[(5-phosphoribosylamino)methylideneamino] imidazole-4-carboxamide isomerase (246 aa).

D12 serves as the catalytic Proton acceptor. Catalysis depends on D134, which acts as the Proton donor.

This sequence belongs to the HisA/HisF family.

It is found in the cytoplasm. It carries out the reaction 1-(5-phospho-beta-D-ribosyl)-5-[(5-phospho-beta-D-ribosylamino)methylideneamino]imidazole-4-carboxamide = 5-[(5-phospho-1-deoxy-D-ribulos-1-ylimino)methylamino]-1-(5-phospho-beta-D-ribosyl)imidazole-4-carboxamide. It functions in the pathway amino-acid biosynthesis; L-histidine biosynthesis; L-histidine from 5-phospho-alpha-D-ribose 1-diphosphate: step 4/9. The polypeptide is 1-(5-phosphoribosyl)-5-[(5-phosphoribosylamino)methylideneamino] imidazole-4-carboxamide isomerase (Psychrobacter cryohalolentis (strain ATCC BAA-1226 / DSM 17306 / VKM B-2378 / K5)).